The sequence spans 219 residues: Lipid transferase CIDEB (219 aa).

The CIDE-N domain maps to 34–110 (PQRPFRVCDH…VLQSGQSWSP (77 aa)).

Belongs to the CIDE family. Interacts with DFFA. Interacts with DFFB; inhibited by DFFB. Interacts with APOB. Interacts with PREB/SEC12; facilitating loading of SCAP-SREBP into COPII vesicles. As to quaternary structure, (Microbial infection) Interacts (via N-terminus) with HCV non-structural protein 5A (via N-terminus); this interaction seems to regulate the association of HCV particles with ApoE. In terms of tissue distribution, highly expressed in liver and small intestine and, at lower levels, in colon, kidney and spleen.

It is found in the lipid droplet. It localises to the endoplasmic reticulum membrane. The protein resides in the golgi apparatus. Its subcellular location is the cytoplasmic vesicle. The protein localises to the COPI-coated vesicle. Its function is as follows. Lipid transferase specifically expressed in hepatocytes, which promotes unilocular lipid droplet formation by mediating lipid droplet fusion. Lipid droplet fusion promotes their enlargement, restricting lipolysis and favoring lipid storage. Localizes on the lipid droplet surface, at focal contact sites between lipid droplets, and mediates atypical lipid droplet fusion by promoting directional net neutral lipid transfer from the smaller to larger lipid droplets. The transfer direction may be driven by the internal pressure difference between the contacting lipid droplet pair. Promotes lipid exchange and lipid droplet fusion in both small and large lipid droplet-containing hepatocytes. In addition to its role in lipid droplet fusion, also involved in cytoplasmic vesicle biogenesis and transport. Required for very-low-density lipoprotein (VLDL) lipidation and maturation. Probably involved in the biogenesis of VLDL transport vesicles by forming a COPII vesicle coat and facilitating the formation of endoplasmic reticulum-derived large vesicles. Also involved in sterol-regulated export of the SCAP-SREBP complex, composed of SCAP, SREBF1/SREBP1 and SREBF2/SREBP2, by promoting loading of SCAP-SREBP into COPII vesicles. May also activate apoptosis. In terms of biological role, (Microbial infection) Involved in Hepatatis C virus (HCV) assembly and required for HCV entry into hepatocytes. The sequence is that of Lipid transferase CIDEB from Homo sapiens (Human).